We begin with the raw amino-acid sequence, 120 residues long: MESLPGQIDKSLDEASLSLRAGSLRTITHILLPLLRPAILSALIYSFVRAITTVSAIVFLVTPDTRVATAYILNRVEDGEYGVAIAYGSILIVVMLAIIFIFDWLIGESRTSRSKAKNQA.

The Cytoplasmic segment spans residues 1–38 (MESLPGQIDKSLDEASLSLRAGSLRTITHILLPLLRPA). Residues 1–102 (MESLPGQIDK…VVMLAIIFIF (102 aa)) enclose the ABC transmembrane type-1 domain. The helical transmembrane segment at 39 to 59 (ILSALIYSFVRAITTVSAIVF) threads the bilayer. The Periplasmic portion of the chain corresponds to 60 to 81 (LVTPDTRVATAYILNRVEDGEY). The chain crosses the membrane as a helical span at residues 82 to 102 (GVAIAYGSILIVVMLAIIFIF). At 103–120 (DWLIGESRTSRSKAKNQA) the chain is on the cytoplasmic side.

It belongs to the binding-protein-dependent transport system permease family. FbpB subfamily.

It localises to the cell inner membrane. Functionally, a severely truncated paralog of the AfuB uptake protein, homologous only to the last 20% of the intact protein in Actinobacillus. The polypeptide is Putative ferric transport system permease-like protein AfuB (afuB) (Escherichia coli (strain K12)).